Reading from the N-terminus, the 188-residue chain is Threonylcarbamoyl-AMP synthase (188 aa).

The YrdC-like domain occupies Gln3 to Gln188.

This sequence belongs to the SUA5 family. TsaC subfamily.

Its subcellular location is the cytoplasm. It catalyses the reaction L-threonine + hydrogencarbonate + ATP = L-threonylcarbamoyladenylate + diphosphate + H2O. Functionally, required for the formation of a threonylcarbamoyl group on adenosine at position 37 (t(6)A37) in tRNAs that read codons beginning with adenine. Catalyzes the conversion of L-threonine, HCO(3)(-)/CO(2) and ATP to give threonylcarbamoyl-AMP (TC-AMP) as the acyladenylate intermediate, with the release of diphosphate. This is Threonylcarbamoyl-AMP synthase from Shewanella putrefaciens (strain CN-32 / ATCC BAA-453).